Here is a 160-residue protein sequence, read N- to C-terminus: Transcriptional regulator MraZ (160 aa).

SpoVT-AbrB domains follow at residues 5–51 and 80–123; these read TFEK…GKAL and MAKL…EREA.

This sequence belongs to the MraZ family. As to quaternary structure, forms oligomers.

The protein localises to the cytoplasm. The protein resides in the nucleoid. The sequence is that of Transcriptional regulator MraZ from Phenylobacterium zucineum (strain HLK1).